Reading from the N-terminus, the 250-residue chain is Probable aquaporin TIP2-2 (250 aa).

Position 1 is an N-acetylmethionine (methionine 1). The Cytoplasmic segment spans residues 1 to 24; it reads MVKIEIGSVGDSFSVASLKAYLSE. Lysine 3 is modified (N6,N6-dimethyllysine). Residues 25 to 45 traverse the membrane as a helical segment; sequence FIATLLFVFAGVGSALAFAKL. Topologically, residues 46–53 are vacuolar; it reads TSDAALDP. The chain crosses the membrane as a helical span at residues 54-74; the sequence is AGLVAVAVAHAFALFVGVSIA. The Cytoplasmic portion of the chain corresponds to 75–101; the sequence is ANISGGHLNPAVTLGLAVGGNITVITG. Positions 83-85 match the NPA 1 motif; the sequence is NPA. The chain crosses the membrane as a helical span at residues 102–122; sequence FFYWIAQCLGSIVACLLLVFV. At 123–133 the chain is on the vacuolar side; it reads TNGESVPTHGV. Residues 134-154 traverse the membrane as a helical segment; sequence AAGLGAIEGVVMEIVVTFALV. Residues 155–168 are Cytoplasmic-facing; that stretch reads YTVYATAADPKKGS. A helical transmembrane segment spans residues 169–189; that stretch reads LGTIAPIAIGFIVGANILAAG. Topologically, residues 190 to 210 are vacuolar; it reads PFSGGSMNPARSFGPAVVSGD. Positions 197-199 match the NPA 2 motif; it reads NPA. Residues 211–231 traverse the membrane as a helical segment; that stretch reads FSQIWIYWVGPLVGGALAGLI. The Cytoplasmic portion of the chain corresponds to 232–250; the sequence is YGDVFIGSYAPAPTTESYP. Serine 248 is subject to Phosphoserine.

It belongs to the MIP/aquaporin (TC 1.A.8) family. TIP (TC 1.A.8.10) subfamily. Interacts with cucumber mosaic virus (CMV) Protein 1a. In terms of tissue distribution, expressed above groung and in roots.

Its subcellular location is the vacuole membrane. Functionally, aquaporins facilitate the transport of water and small neutral solutes across cell membranes. In Arabidopsis thaliana (Mouse-ear cress), this protein is Probable aquaporin TIP2-2 (TIP2-2).